Consider the following 557-residue polypeptide: TNF receptor-associated factor 5 (557 aa).

The RING-type zinc-finger motif lies at 45–85 (CAFCHSVLHNPHQTGCGHRFCQHCILSLRELNTVPICPVDK). TRAF-type zinc fingers lie at residues 127 to 181 (DHLQ…INLQ) and 182 to 239 (NHEE…RNLQ). Residues 237-342 (NLQQHEHSAL…VNQQQNKFDL (106 aa)) are a coiled coil. Lys318 participates in a covalent cross-link: Glycyl lysine isopeptide (Lys-Gly) (interchain with G-Cter in ubiquitin). Residues 345–557 (LMEAVDTVKQ…AVDLTDLEDL (213 aa)) form an interaction with EIF2AK2/PKR region. The MATH domain maps to 403–549 (NGKLIWKVTD…DDTLFLKVAV (147 aa)).

Belongs to the TNF receptor-associated factor family. A subfamily. In terms of assembly, homotrimer. Heteromer with TRAF3. Associates with TNFRSF5/CD40 through interaction with TRAF3. Associates with LTBR/TNFRSF3, TNFRSF4, TNFRSF8/CD30, TNFRSF11A/RANK, TNFRSF13B/TACI, TNFRSF14, TNFRSF17, TNFRSF19/TROY, RIPK2, MAP3K14, MAP3K5, and TRAF and TNF receptor associated protein TDP2. Interacts (via C-terminus) with EIF2AK2/PKR (via the kinase catalytic domain). In terms of processing, ubiquitinated at Lys-318 by the SCF(FBXL2) complex, leading to its degradation by the proteasome. Expressed in spleen, thymus, prostate, testis, ovary, small intestine, colon, and peripheral blood.

Its subcellular location is the cytoplasm. It is found in the cytosol. Its function is as follows. Adapter protein and signal transducer that links members of the tumor necrosis factor receptor family to different signaling pathways by association with the receptor cytoplasmic domain and kinases. Mediates activation of NF-kappa-B and probably JNK. Seems to be involved in apoptosis. Plays a role in mediating activation of NF-kappa-B by EIF2AK2/PKR. This chain is TNF receptor-associated factor 5 (TRAF5), found in Homo sapiens (Human).